Consider the following 213-residue polypeptide: Ribosomal RNA large subunit methyltransferase E (213 aa).

S-adenosyl-L-methionine-binding residues include Gly-59, Phe-61, Asp-79, Asp-97, and Asp-121. Lys-161 (proton acceptor) is an active-site residue.

Belongs to the class I-like SAM-binding methyltransferase superfamily. RNA methyltransferase RlmE family.

It localises to the cytoplasm. The enzyme catalyses uridine(2552) in 23S rRNA + S-adenosyl-L-methionine = 2'-O-methyluridine(2552) in 23S rRNA + S-adenosyl-L-homocysteine + H(+). In terms of biological role, specifically methylates the uridine in position 2552 of 23S rRNA at the 2'-O position of the ribose in the fully assembled 50S ribosomal subunit. The chain is Ribosomal RNA large subunit methyltransferase E from Myxococcus xanthus (strain DK1622).